A 162-amino-acid polypeptide reads, in one-letter code: Interleukin-15 (162 aa).

Positions 1–29 are cleaved as a signal peptide; sequence MRISKPHLRSISIQCYLCLLLNSHFLTEA. The propeptide occupies 30–48; the sequence is GIHVFILGCFSAGLPKTEA. 2 disulfides stabilise this stretch: C83/C133 and C90/C136. Residue N127 is glycosylated (N-linked (GlcNAc...) asparagine).

It belongs to the IL-15/IL-21 family. Most abundant in placenta and skeletal muscle. It is also detected in the heart, lung, liver and kidney. IL15-S21AA is preferentially expressed in tissues such as testis and thymus.

It localises to the secreted. It is found in the cytoplasm. The protein resides in the nucleus. Its function is as follows. Cytokine that plays a major role in the development of inflammatory and protective immune responses to microbial invaders and parasites by modulating immune cells of both the innate and adaptive immune systems. Stimulates the proliferation of natural killer cells, T-cells and B-cells and promotes the secretion of several cytokines. In monocytes, induces the production of IL8 and monocyte chemotactic protein 1/CCL2, two chemokines that attract neutrophils and monocytes respectively to sites of infection. Unlike most cytokines, which are secreted in soluble form, IL15 is expressed in association with its high affinity IL15RA on the surface of IL15-producing cells and delivers signals to target cells that express IL2RB and IL2RG receptor subunits. Binding to its receptor triggers the phosphorylation of JAK1 and JAK3 and the recruitment and subsequent phosphorylation of signal transducer and activator of transcription-3/STAT3 and STAT5. In mast cells, induces the rapid tyrosine phosphorylation of STAT6 and thereby controls mast cell survival and release of cytokines such as IL4. The protein is Interleukin-15 (IL15) of Homo sapiens (Human).